The primary structure comprises 469 residues: MAQGNNYGQTSNGVADESPNMLVYRKMEDVIARMQDEKNGIPIRTVKSFLSKIPSVFSGSDIVQWLIKNLTIEDPVEALHLGTLMAAHGYFFPISDHVLTLKDDGTFYRFQTPYFWPSNCWEPENTDYAVYLCKRTMQNKARLELADYEAESLARLQRAFARKWEFIFMQAEAQAKVDKKRDKIERKILDSQERAFWDVHRPVPGCVNTTEVDIKKSSRMRNPHKTRKSVYGLQNDIRSHSPTHTPTPETKPPTEDELQQQIKYWQIQLDRHRLKMSKVADSLLSYTEQYVEYDPFLAPPDPSNPWLSDDTTFWELEASKEPSQQRVKRWGFGMDEALKDPVGREQFLKFLESEFSSENLRFWLAVEDLKKRPIREVPSRVQEIWQEFLAPGAPSAINLDSKSYDKTTQNVKEPGRYTFEDAQEHIYKLMKSDSYPRFIRSSAYQELLQAKKKGKSLTSKRLTSLVQSY.

The region spanning 37–112 (EKNGIPIRTV…DDGTFYRFQT (76 aa)) is the DEP domain. Serine 229 and serine 241 each carry phosphoserine. The segment at 235 to 256 (NDIRSHSPTHTPTPETKPPTED) is disordered. At threonine 243 the chain carries Phosphothreonine. Residues 255 to 316 (EDELQQQIKY…LSDDTTFWEL (62 aa)) form the G protein gamma domain. The 116-residue stretch at 333–448 (GMDEALKDPV…IRSSAYQELL (116 aa)) folds into the RGS domain. Serine 434 is modified (phosphoserine).

In terms of assembly, interacts with GNB5, forming the RGS7-GNB5 complex. Interacts with GPR158; promotes the GTPase activator activity of the RGS7-GNB5 complex in absence of glycine, in contrast GTPase activator activity of the RGS7-GNB5 complex is inhibited in presence of glycine. Interacts with GPR179. Interacts with PKD1; this prevents rapid proteasomal degradation. Interacts with RGS7BP, leading to regulate the subcellular location of the heterodimer formed with GNB5. Interacts (phosphorylated form) with 14-3-3 protein YWHAQ. Interacts with SNAPIN. Interacts with GNAI1. Interacts with GNAO1, GNAI3 and GNAZ. In terms of processing, palmitoylated. Ubiquitinated, leading to rapid proteasomal degradation. Post-translationally, phosphorylation and subsequent interaction with 14-3-3 proteins inhibits GAP activity. As to expression, detected in retina (at protein level).

Its subcellular location is the cytoplasm. The protein localises to the cytosol. It is found in the cell membrane. It localises to the membrane. Its function is as follows. GTPase activator component of the RGS7-GNB5 complex that regulates G protein-coupled receptor signaling cascades. The RGS7-GNB5 complex acts as an inhibitor signal transduction by promoting the GTPase activity of G protein alpha subunits, such as GNAO1, thereby driving them into their inactive GDP-bound form. May play a role in synaptic vesicle exocytosis. Glycine-dependent regulation of the RGS7-GNB5 complex by GPR158 affects mood and cognition via its ability to regulate neuronal excitability in L2/L3 pyramidal neurons of the prefrontal cortex. Modulates the activity of potassium channels that are activated by GNAO1 in response to muscarinic acetylcholine receptor M2/CHRM2 signaling. This Bos taurus (Bovine) protein is Regulator of G-protein signaling 7 (RGS7).